Reading from the N-terminus, the 597-residue chain is NADPH-dependent diflavin oxidoreductase 1 (597 aa).

A Flavodoxin-like domain is found at 6-150; that stretch reads LLVLFGSQTG…AVDPWLRDLW (145 aa). Residues 12–17, 59–62, 97–106, and aspartate 132 contribute to the FMN site; these read SQTGTA, ATTG, and LGDSSYAKFN. The interval 188-207 is disordered; sequence GSEGQRVAHPGSQEPPSESK. The FAD-binding FR-type domain maps to 206–447; it reads SKPFLAPMIS…VRPGSLAFPE (242 aa). Residues arginine 350, 382–385, and 416–419 each bind FAD; these read RAFS and GLCS. NADP(+) contacts are provided by residues threonine 460, 515-516, 521-525, and aspartate 558; these read SR and KVYVQ. An FAD-binding site is contributed by tryptophan 596.

This sequence belongs to the NADPH-dependent diflavin oxidoreductase NDOR1 family. In the N-terminal section; belongs to the flavodoxin family. It in the C-terminal section; belongs to the flavoprotein pyridine nucleotide cytochrome reductase family. As to quaternary structure, interacts with CIAPIN1; as part of the cytosolic iron-sulfur (Fe-S) protein assembly (CIA) machinery. Interacts with DCPS. It depends on FAD as a cofactor. FMN serves as cofactor. Low expression in brain, heart, kidney, pancreas, prostate and skeletal muscle. Highest levels in the placenta. Expressed in cancer cell lines including promyelocytic leukemia, HeLaS3, chronic myelagenous leukemia, lymphoblastic leukemia, Burkitt's lymphoma, colorectal adenocarcinoma, lung carcinoma, and melanoma G-361.

The protein localises to the cytoplasm. Its subcellular location is the perinuclear region. The catalysed reaction is 2 oxidized [2Fe-2S]-[protein] + NADPH = 2 reduced [2Fe-2S]-[protein] + NADP(+) + H(+). NADPH-dependent reductase which is a central component of the cytosolic iron-sulfur (Fe-S) protein assembly (CIA) machinery. Transfers electrons from NADPH via its FAD and FMN prosthetic groups to the [2Fe-2S] cluster of CIAPIN1, another key component of the CIA machinery. In turn, this reduced cluster provides electrons for assembly of cytosolic iron-sulfur cluster proteins. It can also reduce the [2Fe-2S] cluster of CISD1 and activate this protein implicated in Fe/S cluster repair. In vitro can fully activate methionine synthase/MTR in the presence of soluble cytochrome b5/CYB5A. This Homo sapiens (Human) protein is NADPH-dependent diflavin oxidoreductase 1.